Reading from the N-terminus, the 276-residue chain is Ribosomal RNA small subunit methyltransferase A (276 aa).

S-adenosyl-L-methionine is bound by residues His15, Leu17, Gly42, Glu64, Asp89, and Asn108.

This sequence belongs to the class I-like SAM-binding methyltransferase superfamily. rRNA adenine N(6)-methyltransferase family. RsmA subfamily.

The protein resides in the cytoplasm. It catalyses the reaction adenosine(1518)/adenosine(1519) in 16S rRNA + 4 S-adenosyl-L-methionine = N(6)-dimethyladenosine(1518)/N(6)-dimethyladenosine(1519) in 16S rRNA + 4 S-adenosyl-L-homocysteine + 4 H(+). Its function is as follows. Specifically dimethylates two adjacent adenosines (A1518 and A1519) in the loop of a conserved hairpin near the 3'-end of 16S rRNA in the 30S particle. May play a critical role in biogenesis of 30S subunits. This Prochlorococcus marinus (strain MIT 9515) protein is Ribosomal RNA small subunit methyltransferase A.